The primary structure comprises 730 residues: Procollagen-lysine,2-oxoglutarate 5-dioxygenase 1 (730 aa).

Positions 1-20 (MVPPAVLLPWVVLPLLGVQG) are cleaved as a signal peptide. Asn200, Asn403, and Asn541 each carry an N-linked (GlcNAc...) asparagine glycan. Positions 639–730 (QFELAFVVRY…RYIAVSFIDP (92 aa)) constitute a Fe2OG dioxygenase domain. Fe cation contacts are provided by His659 and Asp661. Asn689 is a glycosylation site (N-linked (GlcNAc...) asparagine). His711 provides a ligand contact to Fe cation. Arg721 is a catalytic residue.

In terms of assembly, homodimer. Requires Fe(2+) as cofactor. The cofactor is L-ascorbate.

It localises to the rough endoplasmic reticulum membrane. The catalysed reaction is L-lysyl-[collagen] + 2-oxoglutarate + O2 = (5R)-5-hydroxy-L-lysyl-[collagen] + succinate + CO2. Functionally, forms hydroxylysine residues in -Xaa-Lys-Gly- sequences in collagens. These hydroxylysines serve as sites of attachment for carbohydrate units and are essential for the stability of the intermolecular collagen cross-links. The protein is Procollagen-lysine,2-oxoglutarate 5-dioxygenase 1 (PLOD1) of Gallus gallus (Chicken).